The primary structure comprises 101 residues: DET1- and DDB1-associated protein 1 (101 aa).

The interval 67–101 (NAAKKRDQDQLEIGETSAPPRKIARTDSQEMSEDT) is disordered.

It belongs to the DDA1 family. Component of numerous DCX (DDB1-CUL4-X-box) E3 ubiquitin-protein ligase complexes which consist of a core of DDB1, cullin-4 (CUL4A or CUL4B), DDA1 and RBX1.

It participates in protein modification; protein ubiquitination. Functionally, functions as a component of numerous distinct DCX (DDB1-CUL4-X-box) E3 ubiquitin-protein ligase complexes which mediate the ubiquitination and subsequent proteasomal degradation of target proteins. In the DCX complexes, acts as a scaffolding subunit required to stabilize the complex. This is DET1- and DDB1-associated protein 1 from Xenopus tropicalis (Western clawed frog).